A 418-amino-acid chain; its full sequence is UDP-N-acetylglucosamine 1-carboxyvinyltransferase (418 aa).

22–23 (KN) is a binding site for phosphoenolpyruvate. Residue Arg-92 participates in UDP-N-acetyl-alpha-D-glucosamine binding. Cys-116 acts as the Proton donor in catalysis. Cys-116 is subject to 2-(S-cysteinyl)pyruvic acid O-phosphothioketal. UDP-N-acetyl-alpha-D-glucosamine contacts are provided by Asp-305 and Val-327.

Belongs to the EPSP synthase family. MurA subfamily.

The protein resides in the cytoplasm. It carries out the reaction phosphoenolpyruvate + UDP-N-acetyl-alpha-D-glucosamine = UDP-N-acetyl-3-O-(1-carboxyvinyl)-alpha-D-glucosamine + phosphate. It participates in cell wall biogenesis; peptidoglycan biosynthesis. Cell wall formation. Adds enolpyruvyl to UDP-N-acetylglucosamine. In Endomicrobium trichonymphae, this protein is UDP-N-acetylglucosamine 1-carboxyvinyltransferase.